Consider the following 379-residue polypeptide: Cobalt-precorrin-5B C(1)-methyltransferase (379 aa).

This sequence belongs to the CbiD family.

The enzyme catalyses Co-precorrin-5B + S-adenosyl-L-methionine = Co-precorrin-6A + S-adenosyl-L-homocysteine. The protein operates within cofactor biosynthesis; adenosylcobalamin biosynthesis; cob(II)yrinate a,c-diamide from sirohydrochlorin (anaerobic route): step 6/10. In terms of biological role, catalyzes the methylation of C-1 in cobalt-precorrin-5B to form cobalt-precorrin-6A. The chain is Cobalt-precorrin-5B C(1)-methyltransferase from Salmonella typhimurium (strain LT2 / SGSC1412 / ATCC 700720).